Consider the following 1025-residue polypeptide: MGGGKNVRRGLEPLEFEECIVDSPDFRENLNRHEKELDHTSHQIKRIIKEVKDLMSAAKILSTRMKQLAILLNDFNFECIGTAQTDDENVICESLKRFGAIIGNIEDEREKMLTLADKHIIESLEDFRKKQIGGVKENKKKFDKKTEKFCQSQERFLNMSTKKPENTIQEADASLGMHEREYIQESLSYVLRIQEVQERIKFEFVEILLAFISGWLVFYHTAHEQAEDHRDYLQDLRHKVQKTRENFEEAREKVTELKTKYMEKRTKPEEIFTKRGYLFLMEKSSILKISLLEPFKATWTKYYCTFKKQKREFTMLQFNQMNHNFTRPEARDDEKLTLFSCQRRASEFEKRFCFDLTFKEKPGVVYTFQALSEKDHRYWISAMDGTEPTYLAPGKIKVSEAYHLDEAGFMFIRRCIQVLEIRGLEDEGIYRKSGVGTKISKLLALGLNQKESDDVFVDDKYRDLMESNTIASALKMYLRNLNEPLMTYQYHSDFIEAAKQETLNQRVNEVHKLVYKLPQPNFQMLDMVICHLTDVSRKYEKNKMSVFNLGVVFGPTLLRPREESVAAILDIKFNNIVINILIDNYERIFKNKPSADIKLPDATKAPSIMYPSRSSPPTRMPRASQIGKAASTGAMGSSSNTAGNPMFLNQQKIYRVVSKTNCTEPTMSSSLQNIPNGDNYALGSNAMNSSGGAQCISLSPPMHMLNGILSPTIGSINNLHTISKNETSTRRYVPDTEIAPDYGIIGANNGGVTLQSHHAVPVSSTSNFRHPEYLMTTANPVTQSGSSSHIYTNTSSAGANSSNRISLSNVSPPNTAMRKERFLGSASGPQQHPPVQRGLHSYGQTKHYSPLMPTSTSSSNDSVCDSLSSNNGLGSSIVANSGNSGNVAQHLSARNTNDYALISSQNSSLSPHLGPTCDEVVTATTLPSVSLSCGGTASESTEYPPSKMHRNRDVNQIKRDLSTGTARVRTLYACMGESEGELSFEPNQIITNVRYSHEPGWLQGTLNGKTGLIPENYVEHLKPHH.

The PH domain maps to 271–388 (IFTKRGYLFL…WISAMDGTEP (118 aa)). A Rho-GAP domain is found at 402 to 589 (YHLDEAGFMF…ILIDNYERIF (188 aa)). The segment at 824 to 866 (GSASGPQQHPPVQRGLHSYGQTKHYSPLMPTSTSSSNDSVCDS) is disordered. Over residues 854-866 (TSTSSSNDSVCDS) the composition is skewed to low complexity. One can recognise an SH3 domain in the interval 963–1023 (TGTARVRTLY…PENYVEHLKP (61 aa)).

In terms of assembly, interacts with Egfr (when ubiquitinated). In terms of tissue distribution, in the adult brain, expressed in the antennal lobe, the subesophageal ganglion and the alpha/beta neurons of the mushroom body.

It is found in the cytoplasm. The protein localises to the cytosol. The protein resides in the cytoplasmic vesicle. Its function is as follows. GTPase-activating protein for Rho family proteins. Essential component of the CLIC (clathrin-independent carrier)/GEEC (GPI-anchored protein-enriched early endocytic compartment) endocytic pathway. During hematopoiesis, inhibits Egfr-ras-MAPK signaling by promoting Spi-induced Egfr internalization through CLIC/GEEC endocytosis, thereby preventing plasmatocyte overproliferation. Essential for normal mushroom body (MB) development and consequently the formation of olfactory long-term memories. During MD development, required to stop the MB beta-lobe from crossing the brain midline, possibly acting via its role in the CLIC/GEEC endocytic pathway to down-regulate the Egfr-ras-MAPK signaling at the tip of the beta-lobes. Required during embryo cellularization for maintaining and regulating the rate of actomyosin ring constriction. During cellularization, inhibits Rho-GTP levels at the furrow canal tip in a spatiotemporal manner, thus delaying the onset of actomyosin contraction and ensuring appropriate closure of the cells at the base of nuclei after membrane extension. The polypeptide is Rho GTPase-activating protein Graf (Drosophila melanogaster (Fruit fly)).